The following is a 145-amino-acid chain: UPF0179 protein Maeo_1037 (145 aa).

This sequence belongs to the UPF0179 family.

The chain is UPF0179 protein Maeo_1037 from Methanococcus aeolicus (strain ATCC BAA-1280 / DSM 17508 / OCM 812 / Nankai-3).